We begin with the raw amino-acid sequence, 290 residues long: MKLSVSIFVLLAVSAFGGGSAAAVSGKSEAAEIEAGDRLDALRDQLQRYETPIIQTILARSALGGRAPSEQDEVRAALSRNAFEPSEVISEWLQTESGARFRSTRPLPPAVEFITPVVLSRDTVLDKPVVGKGIFPIGRRPQDPTNMDEFLDTSLLSLNQSSTVDLASAVSLDVSLLHLVSARVLLGYPIALAKFDWLHDNFCHILTNTTLSKSQKLANIIQQLTDHKQEVNVLSRVEQKSKSLSHLFRNDIPYPPHTQDRILRLFQAYLIPITTQIEAAAILDHANKCT.

A signal peptide spans 1-21; the sequence is MKLSVSIFVLLAVSAFGGGSA. A KWL1-binding extensive loop region (ELR) region spans residues 117–140; that stretch reads VVLSRDTVLDKPVVGKGIFPIGRR. Residues asparagine 159 and asparagine 208 are each glycosylated (N-linked (GlcNAc...) asparagine).

Homodimer. Forms a heterodimer with the host cytosolic chorismate mutase CM2. Interacts with the host kiwellin KWL1 which acts as a defense protein that protects maize from infection.

It localises to the secreted. The protein localises to the host cytoplasm. Its subcellular location is the host cytosol. It carries out the reaction chorismate = prephenate. Its activity is regulated as follows. Contrary to classical chorismate mutases, CMU1 is not subject to allosteric regulation by tryptophan and tyrosine. Activity is decreased in a non-competitive and allosteric manner by the binding of the host defense kiwellin KWL1 which probably blocks substrate access to the active site of CMU1. Secreted chorismate mutase that is one component of a cocktail of effectors shaping the host metabolome and acting as virulence factors. The enzyme is taken up by plant cells, can spread to neighboring cells where it affects the biosynthesis of the plant immune signal salicylic acid by channelling chorismate into the phenylpropanoid pathway. Interferes with the activity of host cytosolic chorismate mutase CM2 through heterodimerization. The protein is Secreted chorismate mutase (CMU1) of Mycosarcoma maydis (Corn smut fungus).